Here is a 522-residue protein sequence, read N- to C-terminus: Sorting nexin-1 (522 aa).

Positions 1 to 144 are disordered; that stretch reads MASGGGGCSA…EEEEQEDQFD (144 aa). A phosphoserine mark is found at serine 32 and serine 39. The span at 35-45 shows a compositional bias: acidic residues; sequence EAGDSDTEGED. Phosphothreonine is present on residues threonine 41 and threonine 48. Polar residues predominate over residues 55–65; sequence KPQSPKKTTSL. Phosphoserine occurs at positions 58 and 72. Residues 71–80 are compositionally biased toward basic and acidic residues; sequence GSKENGIHED. Residues 98-125 show a composition bias toward polar residues; the sequence is LDSTQNNQKTMPGKTLTSHSPQEATNSP. Over residues 132-143 the composition is skewed to acidic residues; sequence EELEEEEQEDQF. Residues 143–272 enclose the PX domain; that stretch reads FDLTVGITDP…EFLEKEELPR (130 aa). 3 residues coordinate a 1,2-diacyl-sn-glycero-3-phospho-(1D-myo-inositol-3-phosphate): arginine 186, serine 188, and lysine 214. Serine 188 carries the phosphoserine modification. Lysine 237 bears the N6-acetyllysine mark. An a 1,2-diacyl-sn-glycero-3-phospho-(1D-myo-inositol-3-phosphate)-binding site is contributed by arginine 238. Position 280 is a phosphoserine (serine 280). The membrane-binding amphipathic helix stretch occupies residues 281–298; sequence GAGLLKMFNKATDAVSKM. A BAR domain is found at 302 to 522; it reads MNESDIWFEE…AFLPEAKAIS (221 aa).

It belongs to the sorting nexin family. As to quaternary structure, predominantly forms heterodimers with BAR domain-containing sorting nexins SNX5, SNX6 and SNX32. Can self-associate to form homodimers. The heterodimers are proposed to self-assemble into helical arrays on the membrane to stabilize and expand local membrane curvature underlying endosomal tubule formation. Thought to be a component of the originally described retromer complex (also called SNX-BAR retromer) which is a pentamer containing the heterotrimeric retromer cargo-selective complex (CSC), also described as vacuolar protein sorting subcomplex (VPS) and a heterodimeric membrane-deforming subcomplex formed between SNX1 or SNX2 and SNX5 or SNX6 (also called SNX-BAR subcomplex); the respective CSC and SNX-BAR subcomplexes associate with low affinity. Interacts with SNX5, SNX6, SNX32, VPS26A, VPS29, VPS35, DRD5, DENND5A, KALRN, RHOG (GDP-bound form). The interaction with SNX2 is reported controversially. Interacts with DNAJC13; prevented by presence of HGS. Interacts with HGS.

It is found in the endosome membrane. The protein resides in the golgi apparatus. The protein localises to the trans-Golgi network membrane. It localises to the early endosome membrane. Its subcellular location is the cell projection. It is found in the lamellipodium. Functionally, involved in several stages of intracellular trafficking. Interacts with membranes containing phosphatidylinositol 3-phosphate (PtdIns(3P)) or phosphatidylinositol 3,5-bisphosphate (PtdIns(3,5)P2). Acts in part as component of the retromer membrane-deforming SNX-BAR subcomplex. The SNX-BAR retromer mediates retrograde transport of cargo proteins from endosomes to the trans-Golgi network (TGN) and is involved in endosome-to-plasma membrane transport for cargo protein recycling. The SNX-BAR subcomplex functions to deform the donor membrane into a tubular profile called endosome-to-TGN transport carrier (ETC). Can sense membrane curvature and has in vitro vesicle-to-membrane remodeling activity. Involved in retrograde endosome-to-TGN transport of lysosomal enzyme receptors (IGF2R, M6PR and SORT1). Plays a role in targeting ligand-activated EGFR to the lysosomes for degradation after endocytosis from the cell surface and release from the Golgi. Involvement in retromer-independent endocytic trafficking of P2RY1 and lysosomal degradation of protease-activated receptor-1/F2R. Promotes KALRN- and RHOG-dependent but retromer-independent membrane remodeling such as lamellipodium formation; the function is dependent on GEF activity of KALRN. Required for endocytosis of DRD5 upon agonist stimulation but not for basal receptor trafficking. The chain is Sorting nexin-1 (Snx1) from Mus musculus (Mouse).